A 1414-amino-acid polypeptide reads, in one-letter code: DNA-directed RNA polymerase subunit beta' (1414 aa).

Zn(2+)-binding residues include C70, C72, C85, and C88. Mg(2+) is bound by residues D461, D463, and D465. Zn(2+) is bound by residues C820, C894, C901, and C904.

The protein belongs to the RNA polymerase beta' chain family. The RNAP catalytic core consists of 2 alpha, 1 beta, 1 beta' and 1 omega subunit. When a sigma factor is associated with the core the holoenzyme is formed, which can initiate transcription. Requires Mg(2+) as cofactor. Zn(2+) serves as cofactor.

The catalysed reaction is RNA(n) + a ribonucleoside 5'-triphosphate = RNA(n+1) + diphosphate. Its function is as follows. DNA-dependent RNA polymerase catalyzes the transcription of DNA into RNA using the four ribonucleoside triphosphates as substrates. The polypeptide is DNA-directed RNA polymerase subunit beta' (Cupriavidus taiwanensis (strain DSM 17343 / BCRC 17206 / CCUG 44338 / CIP 107171 / LMG 19424 / R1) (Ralstonia taiwanensis (strain LMG 19424))).